Consider the following 87-residue polypeptide: Putative outer membrane protein ArbH (87 aa).

An N-terminal signal peptide occupies residues 1–23 (MKIKNSYLVIASLLYPISFISTA).

The protein belongs to the porin LamB (TC 1.B.3) family.

It is found in the cell outer membrane. Functionally, may be a sugar porin with a broad carbohydrate specificity. The chain is Putative outer membrane protein ArbH (arbH) from Dickeya chrysanthemi (Pectobacterium chrysanthemi).